Consider the following 252-residue polypeptide: 3-deoxy-manno-octulosonate cytidylyltransferase 2 (252 aa).

It belongs to the KdsB family.

It is found in the cytoplasm. It catalyses the reaction 3-deoxy-alpha-D-manno-oct-2-ulosonate + CTP = CMP-3-deoxy-beta-D-manno-octulosonate + diphosphate. It functions in the pathway nucleotide-sugar biosynthesis; CMP-3-deoxy-D-manno-octulosonate biosynthesis; CMP-3-deoxy-D-manno-octulosonate from 3-deoxy-D-manno-octulosonate and CTP: step 1/1. Its pathway is bacterial outer membrane biogenesis; lipopolysaccharide biosynthesis. Functionally, activates KDO (a required 8-carbon sugar) for incorporation into bacterial lipopolysaccharide in Gram-negative bacteria. The chain is 3-deoxy-manno-octulosonate cytidylyltransferase 2 from Actinobacillus pleuropneumoniae serotype 5b (strain L20).